A 257-amino-acid polypeptide reads, in one-letter code: ECF RNA polymerase sigma factor SigE (257 aa).

Residues 87 to 153 (LVRQHADRVY…FLDMVRRRAR (67 aa)) are sigma-70 factor domain-2. Residues 111-114 (DLTQ) carry the Polymerase core binding motif. Positions 186-236 (LQAALASLPPEFRAAVVLCDIEGLSYEEIGATLGVKLGTVRSRIHRGRQAL) are sigma-70 factor domain-4. Residues 211–230 (YEEIGATLGVKLGTVRSRIH) constitute a DNA-binding region (H-T-H motif).

It belongs to the sigma-70 factor family. ECF subfamily. In terms of assembly, interacts transiently with the RNA polymerase catalytic core formed by RpoA, RpoB, RpoC and RpoZ (2 alpha, 1 beta, 1 beta' and 1 omega subunit) to form the RNA polymerase holoenzyme that can initiate transcription. Interacts (via sigma-70 factor domain 4) with cognate anti-sigma-E factor RseA under reducing conditions, which stops the sigma factor from functioning.

Sigma factors are initiation factors that promote the attachment of RNA polymerase to specific initiation sites and are then released. Extracytoplasmic function (ECF) sigma factors are held in an inactive form by an anti-sigma factor until released. Responds to surface stress (H(2)O(2)). The protein is ECF RNA polymerase sigma factor SigE (sigE) of Mycobacterium tuberculosis (strain ATCC 35801 / TMC 107 / Erdman).